A 269-amino-acid polypeptide reads, in one-letter code: Triosephosphate isomerase (269 aa).

8–10 (NWK) lines the substrate pocket. Catalysis depends on H105, which acts as the Electrophile. E183 acts as the Proton acceptor in catalysis. Substrate is bound by residues G189, S227, and 248–249 (GG).

The protein belongs to the triosephosphate isomerase family. In terms of assembly, homodimer.

It is found in the cytoplasm. The enzyme catalyses D-glyceraldehyde 3-phosphate = dihydroxyacetone phosphate. The protein operates within carbohydrate biosynthesis; gluconeogenesis. Its pathway is carbohydrate degradation; glycolysis; D-glyceraldehyde 3-phosphate from glycerone phosphate: step 1/1. In terms of biological role, involved in the gluconeogenesis. Catalyzes stereospecifically the conversion of dihydroxyacetone phosphate (DHAP) to D-glyceraldehyde-3-phosphate (G3P). The polypeptide is Triosephosphate isomerase (Psychrobacter arcticus (strain DSM 17307 / VKM B-2377 / 273-4)).